Reading from the N-terminus, the 258-residue chain is 4,5-dihydroxyphthalate decarboxylase (258 aa).

To P.testosteroni DHP decarboxylase.

It catalyses the reaction 4,5-dihydroxyphthalate + H(+) = 3,4-dihydroxybenzoate + CO2. Its pathway is xenobiotic degradation; phthalate degradation; 3,4-dihydroxybenzoate from phthalate: step 3/3. In Pseudomonas putida (Arthrobacter siderocapsulatus), this protein is 4,5-dihydroxyphthalate decarboxylase (pht5).